Here is a 107-residue protein sequence, read N- to C-terminus: Large ribosomal subunit protein uL24 (107 aa).

It belongs to the universal ribosomal protein uL24 family. As to quaternary structure, part of the 50S ribosomal subunit.

Its function is as follows. One of two assembly initiator proteins, it binds directly to the 5'-end of the 23S rRNA, where it nucleates assembly of the 50S subunit. Functionally, one of the proteins that surrounds the polypeptide exit tunnel on the outside of the subunit. The chain is Large ribosomal subunit protein uL24 from Solidesulfovibrio magneticus (strain ATCC 700980 / DSM 13731 / RS-1) (Desulfovibrio magneticus).